The following is a 264-amino-acid chain: 5'-nucleotidase SurE (264 aa).

Residues D10, D11, S43, and N99 each contribute to the a divalent metal cation site.

The protein belongs to the SurE nucleotidase family. A divalent metal cation serves as cofactor.

The protein resides in the cytoplasm. It catalyses the reaction a ribonucleoside 5'-phosphate + H2O = a ribonucleoside + phosphate. Its function is as follows. Nucleotidase that shows phosphatase activity on nucleoside 5'-monophosphates. This Methanococcus vannielii (strain ATCC 35089 / DSM 1224 / JCM 13029 / OCM 148 / SB) protein is 5'-nucleotidase SurE.